A 71-amino-acid polypeptide reads, in one-letter code: Small ribosomal subunit protein bS18 (71 aa).

The protein belongs to the bacterial ribosomal protein bS18 family. Part of the 30S ribosomal subunit. Forms a tight heterodimer with protein bS6.

In terms of biological role, binds as a heterodimer with protein bS6 to the central domain of the 16S rRNA, where it helps stabilize the platform of the 30S subunit. The chain is Small ribosomal subunit protein bS18 from Nostoc punctiforme (strain ATCC 29133 / PCC 73102).